We begin with the raw amino-acid sequence, 81 residues long: Short neurotoxin 1 (81 aa).

A signal peptide spans 1-21; that stretch reads MKTLLLTLVVVTIVCLDLGYT. Disulfide bonds link C24-C43, C38-C60, C62-C73, and C74-C79.

This sequence belongs to the three-finger toxin family. Short-chain subfamily. Type I alpha-neurotoxin sub-subfamily. As to expression, expressed by the venom gland.

The protein localises to the secreted. Its function is as follows. Binds to muscle nicotinic acetylcholine receptor (nAChR) and inhibit acetylcholine from binding to the receptor, thereby impairing neuromuscular transmission. The chain is Short neurotoxin 1 from Tropidechis carinatus (Australian rough-scaled snake).